The primary structure comprises 579 residues: CTP synthase (579 aa).

The amidoligase domain stretch occupies residues 1–281 (MPALRKHPQT…DAYVVRRLNL (281 aa)). Residue Ser23 participates in CTP binding. UTP is bound at residue Ser23. Residues 24 to 29 (SLGKGL) and Asp81 contribute to the ATP site. Mg(2+) is bound by residues Asp81 and Glu155. Residues 162–164 (DIE), 202–207 (KTKPTQ), and Lys238 each bind CTP. UTP-binding positions include 202–207 (KTKPTQ) and Lys238. Residues 306 to 554 (RIALVGKYID…IGAALDYKAA (249 aa)) enclose the Glutamine amidotransferase type-1 domain. Position 369 (Gly369) interacts with L-glutamine. Cys396 acts as the Nucleophile; for glutamine hydrolysis in catalysis. L-glutamine is bound by residues 397–400 (LGLQ), Glu419, and Arg480. Catalysis depends on residues His527 and Glu529.

It belongs to the CTP synthase family. Homotetramer.

It carries out the reaction UTP + L-glutamine + ATP + H2O = CTP + L-glutamate + ADP + phosphate + 2 H(+). The enzyme catalyses L-glutamine + H2O = L-glutamate + NH4(+). The catalysed reaction is UTP + NH4(+) + ATP = CTP + ADP + phosphate + 2 H(+). The protein operates within pyrimidine metabolism; CTP biosynthesis via de novo pathway; CTP from UDP: step 2/2. With respect to regulation, allosterically activated by GTP, when glutamine is the substrate; GTP has no effect on the reaction when ammonia is the substrate. The allosteric effector GTP functions by stabilizing the protein conformation that binds the tetrahedral intermediate(s) formed during glutamine hydrolysis. Inhibited by the product CTP, via allosteric rather than competitive inhibition. Catalyzes the ATP-dependent amination of UTP to CTP with either L-glutamine or ammonia as the source of nitrogen. Regulates intracellular CTP levels through interactions with the four ribonucleotide triphosphates. The sequence is that of CTP synthase from Mycobacterium sp. (strain JLS).